Consider the following 340-residue polypeptide: S-adenosylmethionine:tRNA ribosyltransferase-isomerase (340 aa).

Belongs to the QueA family. In terms of assembly, monomer.

The protein resides in the cytoplasm. It carries out the reaction 7-aminomethyl-7-carbaguanosine(34) in tRNA + S-adenosyl-L-methionine = epoxyqueuosine(34) in tRNA + adenine + L-methionine + 2 H(+). It functions in the pathway tRNA modification; tRNA-queuosine biosynthesis. Functionally, transfers and isomerizes the ribose moiety from AdoMet to the 7-aminomethyl group of 7-deazaguanine (preQ1-tRNA) to give epoxyqueuosine (oQ-tRNA). The chain is S-adenosylmethionine:tRNA ribosyltransferase-isomerase from Campylobacter concisus (strain 13826).